The sequence spans 109 residues: Spermidine export protein MdtI (109 aa).

4 helical membrane passes run tryptophan 6–leucine 26, tryptophan 36–valine 56, alanine 64–phenylalanine 84, and leucine 88–leucine 108.

It belongs to the drug/metabolite transporter (DMT) superfamily. Small multidrug resistance (SMR) (TC 2.A.7.1) family. MdtI subfamily. In terms of assembly, forms a complex with MdtJ.

It localises to the cell inner membrane. Catalyzes the excretion of spermidine. The sequence is that of Spermidine export protein MdtI from Enterobacter sp. (strain 638).